The primary structure comprises 89 residues: Small ribosomal subunit protein uS15 (89 aa).

It belongs to the universal ribosomal protein uS15 family. In terms of assembly, part of the 30S ribosomal subunit. Forms a bridge to the 50S subunit in the 70S ribosome, contacting the 23S rRNA.

One of the primary rRNA binding proteins, it binds directly to 16S rRNA where it helps nucleate assembly of the platform of the 30S subunit by binding and bridging several RNA helices of the 16S rRNA. In terms of biological role, forms an intersubunit bridge (bridge B4) with the 23S rRNA of the 50S subunit in the ribosome. The polypeptide is Small ribosomal subunit protein uS15 (Cyanothece sp. (strain PCC 7425 / ATCC 29141)).